Reading from the N-terminus, the 100-residue chain is Integration host factor subunit alpha (100 aa).

Belongs to the bacterial histone-like protein family. As to quaternary structure, heterodimer of an alpha and a beta chain.

In terms of biological role, this protein is one of the two subunits of integration host factor, a specific DNA-binding protein that functions in genetic recombination as well as in transcriptional and translational control. This Hahella chejuensis (strain KCTC 2396) protein is Integration host factor subunit alpha.